A 508-amino-acid polypeptide reads, in one-letter code: MTANEFILALDQGTTSSRAIVFDRAGTVRGMGQREFRQHYPRPGWVEHDAGEIWQSQLEVAREALRNAGASAADLAALGITNQRETTLIWERATGRPLARAIVWQDRRTAAMCEKLLHDGHGRMLQERTGLVVDAYFSGTKLAWLLDHVPGARKMAERGELAFGTVDTWLVWQLTGGAVHSTDPSNASRTMLFDLHAQDWSDDILALLNIPRGILPRIAPSSARIGETLPEWLGGSIPIAGVAGDQQAATFGQACFTPGMAKNTYGTGCFMLMNVGDAPVASRHNLLSTVGWSLPAGNATHATYMVEGGVFMAGAAVQWLRDGLGIIQRSADIEALAASVADTDDVFMVPAFAGLGAPHWDPYARGTLVGMTRGTTRAHIARATLESIALQSAELLSCMNADSGIPLSELRVDGGAARNDLLMQMQADLLGVPVVRPRVPESTALGAAGLAGLAVGFWSSLDEFGAQWQAERTFEPAWPADVREARMQRWRQAVELSKGWSRPAAGHA.

Thr14 is a binding site for ADP. Thr14, Thr15, and Ser16 together coordinate ATP. Thr14 contributes to the sn-glycerol 3-phosphate binding site. Arg18 lines the ADP pocket. 4 residues coordinate sn-glycerol 3-phosphate: Arg84, Glu85, Tyr136, and Asp245. Glycerol-binding residues include Arg84, Glu85, Tyr136, Asp245, and Gln246. Thr267 and Gly314 together coordinate ADP. Thr267, Gly314, Gln318, and Gly415 together coordinate ATP. Residues Gly415 and Asn419 each contribute to the ADP site.

This sequence belongs to the FGGY kinase family.

It catalyses the reaction glycerol + ATP = sn-glycerol 3-phosphate + ADP + H(+). The protein operates within polyol metabolism; glycerol degradation via glycerol kinase pathway; sn-glycerol 3-phosphate from glycerol: step 1/1. With respect to regulation, inhibited by fructose 1,6-bisphosphate (FBP). Its function is as follows. Key enzyme in the regulation of glycerol uptake and metabolism. Catalyzes the phosphorylation of glycerol to yield sn-glycerol 3-phosphate. The polypeptide is Glycerol kinase (Bordetella parapertussis (strain 12822 / ATCC BAA-587 / NCTC 13253)).